The chain runs to 261 residues: Proteasome subunit alpha type-4 (261 aa).

2 positions are modified to phosphoserine: Ser-13 and Ser-75. Lys-127 is subject to N6-acetyllysine. Ser-173 is modified (phosphoserine). Lys-176 carries the post-translational modification N6-acetyllysine. Residues His-240 to Lys-261 form a disordered region.

The protein belongs to the peptidase T1A family. As to quaternary structure, the 26S proteasome consists of a 20S proteasome core and two 19S regulatory subunits. The 20S proteasome core is a barrel-shaped complex made of 28 subunits that are arranged in four stacked rings. The two outer rings are each formed by seven alpha subunits, and the two inner rings are formed by seven beta subunits. The proteolytic activity is exerted by three beta-subunits PSMB5, PSMB6 and PSMB7.

The protein localises to the cytoplasm. It is found in the nucleus. Its function is as follows. Component of the 20S core proteasome complex involved in the proteolytic degradation of most intracellular proteins. This complex plays numerous essential roles within the cell by associating with different regulatory particles. Associated with two 19S regulatory particles, forms the 26S proteasome and thus participates in the ATP-dependent degradation of ubiquitinated proteins. The 26S proteasome plays a key role in the maintenance of protein homeostasis by removing misfolded or damaged proteins that could impair cellular functions, and by removing proteins whose functions are no longer required. Associated with the PA200 or PA28, the 20S proteasome mediates ubiquitin-independent protein degradation. This type of proteolysis is required in several pathways including spermatogenesis (20S-PA200 complex) or generation of a subset of MHC class I-presented antigenic peptides (20S-PA28 complex). The chain is Proteasome subunit alpha type-4 (PSMA4) from Bos taurus (Bovine).